The sequence spans 651 residues: MLRGPAAVWAALGPLLWACGLALRGGMLYPRESPSRERKELNGLWSFRADFSENRRQGFEQQWYRTPLRESGPTLDMPVPSSFNDVGQDRQLRSFVGWVWYEREATLPQRWTQDLGTRVVLRIGSAHYYAIVWVNGVHVAEHEGGHLPFEADISKLVQSGPLASCRITIAINNTLTPHTLPPGTILYQTDTSKYPKGYFVQNINFDFFNYAGLHRPVLLYTTPTTYIDDITISTSVNQDTGLVDYQIFVEGGEHFQLEVRLLDEEGKVVAQGTGGRGQLQVPNAHLWWPYLMHEHPAYLYSLEVRLTAQTAAGSVSDFYTLPVGIRTVAVTEHQFLINGKPFYFHGVNKHEDADIRGKGFDWPLLVKDFNLLRWLGANAFRTSHYPYAEEVMQLCDRYGIVVIDESPGVGIVLVESYSNVSLQHHLEVMEELVRRDKNHPAVVMWSVANEPASFLKPAGYYFKTLIAHTKALDPSRPVTFVTNSNYEADLGAPYVDVICVNSYYSWYHDYGHMEVIQLQLATQFENWYRTYQKPIIQSEYGADTIAGFHQDPPLMFSEEYQKGLLEQYHLVLDQKRKEYVVGELIWNFADFMTNQSPQRVMGNKKGIFTRQRQPKGAAFLLRERYWKLANETRYPWSAVKSQCLENSPFTL.

The N-terminal stretch at 1–22 (MLRGPAAVWAALGPLLWACGLA) is a signal peptide. Asn172 and Asn419 each carry an N-linked (GlcNAc...) asparagine glycan. The Proton donor role is filled by Glu450. Asn630 carries an N-linked (GlcNAc...) asparagine glycan.

This sequence belongs to the glycosyl hydrolase 2 family. In terms of assembly, homotetramer.

The protein resides in the lysosome. It carries out the reaction a beta-D-glucuronoside + H2O = D-glucuronate + an alcohol. Inhibited by L-aspartic acid. Plays an important role in the degradation of dermatan and keratan sulfates. The polypeptide is Beta-glucuronidase (GUSB) (Felis catus (Cat)).